The sequence spans 218 residues: Thiopurine S-methyltransferase (218 aa).

Residues tryptophan 10, leucine 45, glutamate 66, and arginine 123 each coordinate S-adenosyl-L-methionine.

Belongs to the class I-like SAM-binding methyltransferase superfamily. TPMT family.

The protein resides in the cytoplasm. The enzyme catalyses S-adenosyl-L-methionine + a thiopurine = S-adenosyl-L-homocysteine + a thiopurine S-methylether.. The polypeptide is Thiopurine S-methyltransferase (Pseudomonas aeruginosa (strain UCBPP-PA14)).